The following is a 268-amino-acid chain: Phosphatidylglycerol--prolipoprotein diacylglyceryl transferase (268 aa).

3 helical membrane passes run 25 to 45 (WYGV…TKVF), 57 to 77 (YLFY…HCFF), and 93 to 113 (VWHG…AVYF). Arginine 142 provides a ligand contact to a 1,2-diacyl-sn-glycero-3-phospho-(1'-sn-glycerol). Transmembrane regions (helical) follow at residues 151 to 171 (IIGI…DLLP), 175 to 195 (VQLY…LAYW), 204 to 224 (GLLL…LEFF), and 236 to 256 (PLSV…LLIF).

The protein belongs to the Lgt family.

It localises to the cell inner membrane. The enzyme catalyses L-cysteinyl-[prolipoprotein] + a 1,2-diacyl-sn-glycero-3-phospho-(1'-sn-glycerol) = an S-1,2-diacyl-sn-glyceryl-L-cysteinyl-[prolipoprotein] + sn-glycerol 1-phosphate + H(+). It functions in the pathway protein modification; lipoprotein biosynthesis (diacylglyceryl transfer). Catalyzes the transfer of the diacylglyceryl group from phosphatidylglycerol to the sulfhydryl group of the N-terminal cysteine of a prolipoprotein, the first step in the formation of mature lipoproteins. The polypeptide is Phosphatidylglycerol--prolipoprotein diacylglyceryl transferase (Chloroherpeton thalassium (strain ATCC 35110 / GB-78)).